The chain runs to 297 residues: Aspartate carbamoyltransferase catalytic subunit (297 aa).

2 residues coordinate carbamoyl phosphate: R52 and T53. K80 is a binding site for L-aspartate. The carbamoyl phosphate site is built by R102, H130, and Q133. R167 and R217 together coordinate L-aspartate. Carbamoyl phosphate-binding residues include G256 and P257.

The protein belongs to the aspartate/ornithine carbamoyltransferase superfamily. ATCase family. As to quaternary structure, heterododecamer (2C3:3R2) of six catalytic PyrB chains organized as two trimers (C3), and six regulatory PyrI chains organized as three dimers (R2).

The catalysed reaction is carbamoyl phosphate + L-aspartate = N-carbamoyl-L-aspartate + phosphate + H(+). The protein operates within pyrimidine metabolism; UMP biosynthesis via de novo pathway; (S)-dihydroorotate from bicarbonate: step 2/3. Catalyzes the condensation of carbamoyl phosphate and aspartate to form carbamoyl aspartate and inorganic phosphate, the committed step in the de novo pyrimidine nucleotide biosynthesis pathway. This Helicobacter hepaticus (strain ATCC 51449 / 3B1) protein is Aspartate carbamoyltransferase catalytic subunit.